The primary structure comprises 577 residues: Urease subunit alpha (577 aa).

Residues 136-577 (GGIDCHVHFI…LPMAQRYFLF (442 aa)) enclose the Urease domain. Ni(2+)-binding residues include H141, H143, and K224. The residue at position 224 (K224) is an N6-carboxylysine. Residue H226 participates in substrate binding. Ni(2+) is bound by residues H253 and H279. H327 serves as the catalytic Proton donor. D367 is a binding site for Ni(2+).

Belongs to the metallo-dependent hydrolases superfamily. Urease alpha subunit family. As to quaternary structure, heterotrimer of UreA (gamma), UreB (beta) and UreC (alpha) subunits. Three heterotrimers associate to form the active enzyme. It depends on Ni cation as a cofactor. In terms of processing, carboxylation allows a single lysine to coordinate two nickel ions.

It localises to the cytoplasm. It carries out the reaction urea + 2 H2O + H(+) = hydrogencarbonate + 2 NH4(+). The protein operates within nitrogen metabolism; urea degradation; CO(2) and NH(3) from urea (urease route): step 1/1. In Mycobacteroides abscessus (strain ATCC 19977 / DSM 44196 / CCUG 20993 / CIP 104536 / JCM 13569 / NCTC 13031 / TMC 1543 / L948) (Mycobacterium abscessus), this protein is Urease subunit alpha.